A 376-amino-acid polypeptide reads, in one-letter code: Alkanesulfonate monooxygenase (376 aa).

It belongs to the SsuD family.

The catalysed reaction is an alkanesulfonate + FMNH2 + O2 = an aldehyde + FMN + sulfite + H2O + 2 H(+). Catalyzes the desulfonation of aliphatic sulfonates. The polypeptide is Alkanesulfonate monooxygenase (Bacillus licheniformis (strain ATCC 14580 / DSM 13 / JCM 2505 / CCUG 7422 / NBRC 12200 / NCIMB 9375 / NCTC 10341 / NRRL NRS-1264 / Gibson 46)).